We begin with the raw amino-acid sequence, 439 residues long: Proton pump-interactor 4 (439 aa).

A coiled-coil region spans residues 286–354 (KEEKEIDEET…AKKKKAVCKS (69 aa)). The chain crosses the membrane as a helical span at residues 415-435 (LWVWTVSSAAVALPLALLVVF).

Belongs to the plant Proton pump-interactor protein family.

The protein resides in the cell membrane. The protein localises to the endoplasmic reticulum membrane. In terms of biological role, may regulate plasma membrane ATPase activity. In Arabidopsis thaliana (Mouse-ear cress), this protein is Proton pump-interactor 4 (PPI4).